The primary structure comprises 324 residues: tRNA dimethylallyltransferase (324 aa).

17–24 (GPTASGKT) contributes to the ATP binding site. Residue 19–24 (TASGKT) coordinates substrate. Interaction with substrate tRNA stretches follow at residues 42 to 45 (DSAL), 166 to 170 (QRIQR), and 251 to 256 (RCVGYR).

The protein belongs to the IPP transferase family. In terms of assembly, monomer. Mg(2+) is required as a cofactor.

It carries out the reaction adenosine(37) in tRNA + dimethylallyl diphosphate = N(6)-dimethylallyladenosine(37) in tRNA + diphosphate. Catalyzes the transfer of a dimethylallyl group onto the adenine at position 37 in tRNAs that read codons beginning with uridine, leading to the formation of N6-(dimethylallyl)adenosine (i(6)A). In Burkholderia mallei (strain NCTC 10247), this protein is tRNA dimethylallyltransferase.